The chain runs to 208 residues: Sodium/potassium-transporting ATPase subunit beta-1-interacting protein 4 (208 aa).

4 consecutive transmembrane segments (helical) span residues 10–30, 35–55, 62–82, and 151–171; these read LILL…FDFL, APIL…FGTL, VIAY…LICF, and ALQI…TSVF.

The protein belongs to the NKAIN family. In terms of assembly, interacts with atp1b1 C-terminus.

The protein localises to the cell membrane. This chain is Sodium/potassium-transporting ATPase subunit beta-1-interacting protein 4 (nkain4), found in Xenopus tropicalis (Western clawed frog).